The primary structure comprises 709 residues: Polyribonucleotide nucleotidyltransferase (709 aa).

Mg(2+) contacts are provided by Asp485 and Asp491. The 60-residue stretch at 552-611 (PRIYTMKIDPKKIKDVIGKGGATIRSLTEETGTSIDIDDDGTVKIAAVDSNAAKNVMGRI) folds into the KH domain. The 69-residue stretch at 621-689 (GAIYKGKVTR…RQGRIRLTMK (69 aa)) folds into the S1 motif domain.

The protein belongs to the polyribonucleotide nucleotidyltransferase family. As to quaternary structure, component of the RNA degradosome, which is a multiprotein complex involved in RNA processing and mRNA degradation. Requires Mg(2+) as cofactor.

It is found in the cytoplasm. It carries out the reaction RNA(n+1) + phosphate = RNA(n) + a ribonucleoside 5'-diphosphate. In terms of biological role, involved in mRNA degradation. Catalyzes the phosphorolysis of single-stranded polyribonucleotides processively in the 3'- to 5'-direction. This is Polyribonucleotide nucleotidyltransferase from Haemophilus influenzae (strain PittEE).